The following is a 930-amino-acid chain: Isoleucine--tRNA ligase (930 aa).

A 'HIGH' region motif is present at residues 57–67 (PYANGNIHVGH). Glutamate 554 serves as a coordination point for L-isoleucyl-5'-AMP. Residues 595 to 599 (KMSKS) carry the 'KMSKS' region motif. An ATP-binding site is contributed by lysine 598. Positions 888, 891, 908, and 911 each coordinate Zn(2+).

It belongs to the class-I aminoacyl-tRNA synthetase family. IleS type 1 subfamily. As to quaternary structure, monomer. Zn(2+) is required as a cofactor.

It localises to the cytoplasm. It carries out the reaction tRNA(Ile) + L-isoleucine + ATP = L-isoleucyl-tRNA(Ile) + AMP + diphosphate. In terms of biological role, catalyzes the attachment of isoleucine to tRNA(Ile). As IleRS can inadvertently accommodate and process structurally similar amino acids such as valine, to avoid such errors it has two additional distinct tRNA(Ile)-dependent editing activities. One activity is designated as 'pretransfer' editing and involves the hydrolysis of activated Val-AMP. The other activity is designated 'posttransfer' editing and involves deacylation of mischarged Val-tRNA(Ile). The sequence is that of Isoleucine--tRNA ligase from Streptococcus pneumoniae serotype 19F (strain G54).